The following is a 77-amino-acid chain: Small ribosomal subunit protein bS16 (77 aa).

Belongs to the bacterial ribosomal protein bS16 family.

The polypeptide is Small ribosomal subunit protein bS16 (Wolinella succinogenes (strain ATCC 29543 / DSM 1740 / CCUG 13145 / JCM 31913 / LMG 7466 / NCTC 11488 / FDC 602W) (Vibrio succinogenes)).